A 243-amino-acid polypeptide reads, in one-letter code: Ice-binding protein K1-A (243 aa).

The N-terminal stretch at 1–20 is a signal peptide; sequence MFSSTYLLAIIALAVSSVFA.

This sequence belongs to the ice-binding protein family.

It localises to the secreted. Functionally, binds to the surface of ice crystals. Inhibits growth of the ice crystals. Has antifreeze activity for survival under snow cover. Has high thermal hysteresis (TH) activity, which is the ability to lower the freezing point of an aqueous solution below its melting point, and thus the freezing of the cell fluid can be prevented protecting the organism from ice damage. The TH activity of this protein is 2.0 degrees Celsius at 0.11 mM. In Typhula ishikariensis (Gray snow mold fungus), this protein is Ice-binding protein K1-A.